The following is a 282-amino-acid chain: 2-dehydro-3-deoxyphosphooctonate aldolase (282 aa).

It belongs to the KdsA family.

The protein localises to the cytoplasm. The enzyme catalyses D-arabinose 5-phosphate + phosphoenolpyruvate + H2O = 3-deoxy-alpha-D-manno-2-octulosonate-8-phosphate + phosphate. Its pathway is carbohydrate biosynthesis; 3-deoxy-D-manno-octulosonate biosynthesis; 3-deoxy-D-manno-octulosonate from D-ribulose 5-phosphate: step 2/3. It participates in bacterial outer membrane biogenesis; lipopolysaccharide biosynthesis. The protein is 2-dehydro-3-deoxyphosphooctonate aldolase of Shewanella sp. (strain MR-4).